A 227-amino-acid chain; its full sequence is Interleukin-6 (227 aa).

The N-terminal stretch at 1 to 22 (MASISYLLAPLVLAAVLQPTAG) is a signal peptide. The segment at 24-45 (PLDAPTESPAGETSGEEAETGS) is disordered. Cysteine 93 and cysteine 103 are oxidised to a cystine.

This sequence belongs to the IL-6 superfamily. Component of a hexamer of two molecules each of IL6, IL6R and IL6ST; first binds to IL6R to associate with the signaling subunit IL6ST. After induction, highly expressed in spleen. Can also be expressed in kidney after incubation with PHA.

The protein localises to the secreted. Its function is as follows. Cytokine with a wide variety of biological functions in immunity, tissue regeneration, and metabolism. Binds to IL6R, then the complex associates to the signaling subunit IL6ST/gp130 to trigger the intracellular IL6-signaling pathway. The interaction with the membrane-bound IL6R and IL6ST stimulates 'classic signaling', whereas the binding of IL6 and soluble IL6R to IL6ST stimulates 'trans-signaling'. Alternatively, 'cluster signaling' occurs when membrane-bound IL6:IL6R complexes on transmitter cells activate IL6ST receptors on neighboring receiver cells. The chain is Interleukin-6 (il6) from Takifugu rubripes (Japanese pufferfish).